Consider the following 505-residue polypeptide: Chromosomal replication initiator protein DnaA (505 aa).

The interval 1-90 is domain I, interacts with DnaA modulators; sequence MSVELWQQCV…RRSSAPRAAP (90 aa). The domain II stretch occupies residues 91-168; it reads NAPVSAAVAA…QVEGALKHTS (78 aa). Positions 169–385 are domain III, AAA+ region; it reads YLNRTFTFDT…GALKRVIAHS (217 aa). 4 residues coordinate ATP: Gly-213, Gly-215, Lys-216, and Thr-217. The segment at 386–505 is domain IV, binds dsDNA; that stretch reads HFMGRDITIE…YKNLLRTLTT (120 aa).

It belongs to the DnaA family. As to quaternary structure, oligomerizes as a right-handed, spiral filament on DNA at oriC.

It is found in the cytoplasm. Functionally, plays an essential role in the initiation and regulation of chromosomal replication. ATP-DnaA binds to the origin of replication (oriC) to initiate formation of the DNA replication initiation complex once per cell cycle. Binds the DnaA box (a 9 base pair repeat at the origin) and separates the double-stranded (ds)DNA. Forms a right-handed helical filament on oriC DNA; dsDNA binds to the exterior of the filament while single-stranded (ss)DNA is stabiized in the filament's interior. The ATP-DnaA-oriC complex binds and stabilizes one strand of the AT-rich DNA unwinding element (DUE), permitting loading of DNA polymerase. After initiation quickly degrades to an ADP-DnaA complex that is not apt for DNA replication. Binds acidic phospholipids. The chain is Chromosomal replication initiator protein DnaA from Pseudomonas putida (strain ATCC 700007 / DSM 6899 / JCM 31910 / BCRC 17059 / LMG 24140 / F1).